Here is a 251-residue protein sequence, read N- to C-terminus: 1-(5-phosphoribosyl)-5-[(5-phosphoribosylamino)methylideneamino] imidazole-4-carboxamide isomerase (251 aa).

Residue Asp-7 is the Proton acceptor of the active site. Asp-131 (proton donor) is an active-site residue.

The protein belongs to the HisA/HisF family.

It is found in the cytoplasm. It carries out the reaction 1-(5-phospho-beta-D-ribosyl)-5-[(5-phospho-beta-D-ribosylamino)methylideneamino]imidazole-4-carboxamide = 5-[(5-phospho-1-deoxy-D-ribulos-1-ylimino)methylamino]-1-(5-phospho-beta-D-ribosyl)imidazole-4-carboxamide. It functions in the pathway amino-acid biosynthesis; L-histidine biosynthesis; L-histidine from 5-phospho-alpha-D-ribose 1-diphosphate: step 4/9. In Blochmanniella floridana, this protein is 1-(5-phosphoribosyl)-5-[(5-phosphoribosylamino)methylideneamino] imidazole-4-carboxamide isomerase.